The primary structure comprises 240 residues: TATA-box-binding protein (240 aa).

The interval 21–61 (NTRQVWENQNRDGTKPATTFQSEEDIKRAAPESEKDTSATS) is disordered. The span at 44–57 (EDIKRAAPESEKDT) shows a compositional bias: basic and acidic residues. Repeat copies occupy residues 67–143 (LQNI…ARII) and 157–234 (IQNI…YPVL).

The protein belongs to the TBP family. Binds DNA as monomer. The 1.2 MDa TFIID complex is composed of TATA binding protein (TBP) and the 14 TBP-associated factors. One copy of each TAF1, TAF2, TAF3, TAF7, TAF8, TAF11, TAF13, two copies of each TAF4, TAF5, TAF6, TAF9, TAF10, TAF12, and three copies of TAF14. Interacts with TFC8.

The protein resides in the nucleus. Its function is as follows. General transcription factor that functions at the core of the DNA-binding general transcription factor complex TFIID. Binding of TFIID to a promoter (with or without TATA element) is the initial step in preinitiation complex (PIC) formation. TFIID plays a key role in the regulation of gene expression by RNA polymerase II through different activities such as transcription activator interaction, core promoter recognition and selectivity, TFIIA and TFIIB interaction, chromatin modification (histone acetylation by TAF1), facilitation of DNA opening and initiation of transcription. The polypeptide is TATA-box-binding protein (SPT15) (Saccharomyces cerevisiae (strain ATCC 204508 / S288c) (Baker's yeast)).